Consider the following 490-residue polypeptide: Thiamine biosynthesis bifunctional protein ThiED (490 aa).

The segment at 1-213 (MASNGHTLRL…PDPALAATEI (213 aa)) is thiamine-phosphate synthase. 4-amino-2-methyl-5-(diphosphooxymethyl)pyrimidine is bound by residues 50 to 54 (QYRNK) and N82. Residues D83 and D102 each contribute to the Mg(2+) site. S121 is a binding site for 4-amino-2-methyl-5-(diphosphooxymethyl)pyrimidine. 147–149 (SRS) contributes to the 2-[(2R,5Z)-2-carboxy-4-methylthiazol-5(2H)-ylidene]ethyl phosphate binding site. K150 serves as a coordination point for 4-amino-2-methyl-5-(diphosphooxymethyl)pyrimidine. 2-[(2R,5Z)-2-carboxy-4-methylthiazol-5(2H)-ylidene]ethyl phosphate-binding positions include G177 and 197–198 (IS). The segment at 229 to 490 (LTVAGSDSGG…ILAAEDVRDR (262 aa)) is hydroxymethylpyrimidine/phosphomethylpyrimidine kinase. Q266 provides a ligand contact to 4-amino-5-hydroxymethyl-2-methylpyrimidine.

The protein in the N-terminal section; belongs to the thiamine-phosphate synthase family. It in the C-terminal section; belongs to the ThiD family. Mg(2+) serves as cofactor.

It catalyses the reaction 2-[(2R,5Z)-2-carboxy-4-methylthiazol-5(2H)-ylidene]ethyl phosphate + 4-amino-2-methyl-5-(diphosphooxymethyl)pyrimidine + 2 H(+) = thiamine phosphate + CO2 + diphosphate. The catalysed reaction is 2-(2-carboxy-4-methylthiazol-5-yl)ethyl phosphate + 4-amino-2-methyl-5-(diphosphooxymethyl)pyrimidine + 2 H(+) = thiamine phosphate + CO2 + diphosphate. It carries out the reaction 4-methyl-5-(2-phosphooxyethyl)-thiazole + 4-amino-2-methyl-5-(diphosphooxymethyl)pyrimidine + H(+) = thiamine phosphate + diphosphate. The enzyme catalyses 4-amino-5-hydroxymethyl-2-methylpyrimidine + ATP = 4-amino-2-methyl-5-(phosphooxymethyl)pyrimidine + ADP + H(+). It catalyses the reaction 4-amino-2-methyl-5-(phosphooxymethyl)pyrimidine + ATP = 4-amino-2-methyl-5-(diphosphooxymethyl)pyrimidine + ADP. Its pathway is cofactor biosynthesis; thiamine diphosphate biosynthesis; 4-amino-2-methyl-5-diphosphomethylpyrimidine from 5-amino-1-(5-phospho-D-ribosyl)imidazole: step 3/3. The protein operates within cofactor biosynthesis; thiamine diphosphate biosynthesis; thiamine phosphate from 4-amino-2-methyl-5-diphosphomethylpyrimidine and 4-methyl-5-(2-phosphoethyl)-thiazole: step 1/1. In terms of biological role, condenses 4-methyl-5-(beta-hydroxyethyl)thiazole monophosphate (THZ-P) and 2-methyl-4-amino-5-hydroxymethyl pyrimidine pyrophosphate (HMP-PP) to form thiamine monophosphate (TMP). Its function is as follows. Catalyzes the phosphorylation of hydroxymethylpyrimidine phosphate (HMP-P) to HMP-PP, and of HMP to HMP-P. This Geobacter sulfurreducens (strain ATCC 51573 / DSM 12127 / PCA) protein is Thiamine biosynthesis bifunctional protein ThiED (thiDE).